Reading from the N-terminus, the 209-residue chain is Small ribosomal subunit protein uS4 (209 aa).

A disordered region spans residues 23-46 (SRNPLLKKPHPPGQHGMQRKKKSD). The S4 RNA-binding domain maps to 93 to 156 (CRLDNMVYRM…RKLQSVQESL (64 aa)).

This sequence belongs to the universal ribosomal protein uS4 family. In terms of assembly, part of the 30S ribosomal subunit. Contacts protein S5. The interaction surface between S4 and S5 is involved in control of translational fidelity.

One of the primary rRNA binding proteins, it binds directly to 16S rRNA where it nucleates assembly of the body of the 30S subunit. Functionally, with S5 and S12 plays an important role in translational accuracy. The sequence is that of Small ribosomal subunit protein uS4 from Chlamydia caviae (strain ATCC VR-813 / DSM 19441 / 03DC25 / GPIC) (Chlamydophila caviae).